Here is a 31-residue protein sequence, read N- to C-terminus: Scolopendra 20566.01 Da toxin (31 aa).

Belongs to the CRISP family. Venom allergen 5-like subfamily. In terms of processing, contains 3 disulfide bonds. As to expression, expressed by the venom gland.

The protein resides in the secreted. This chain is Scolopendra 20566.01 Da toxin, found in Scolopendra angulata (Barbados giant red centipede).